Here is a 485-residue protein sequence, read N- to C-terminus: ATP synthase subunit beta, cyanelle (485 aa).

162–169 (GGAGVGKT) contacts ATP.

It belongs to the ATPase alpha/beta chains family. In terms of assembly, F-type ATPases have 2 components, CF(1) - the catalytic core - and CF(0) - the membrane proton channel. CF(1) has five subunits: alpha(3), beta(3), gamma(1), delta(1), epsilon(1). CF(0) has four main subunits: a(1), b(1), b'(1) and c(9-12).

Its subcellular location is the plastid. It localises to the cyanelle thylakoid membrane. The enzyme catalyses ATP + H2O + 4 H(+)(in) = ADP + phosphate + 5 H(+)(out). In terms of biological role, produces ATP from ADP in the presence of a proton gradient across the membrane. The catalytic sites are hosted primarily by the beta subunits. The polypeptide is ATP synthase subunit beta, cyanelle (Cyanophora paradoxa).